The primary structure comprises 324 residues: Beta-ketoacyl-[acyl-carrier-protein] synthase III (324 aa).

Catalysis depends on residues C112 and H249. An ACP-binding region spans residues 250 to 254 (QANRR). Residue N279 is part of the active site.

It belongs to the thiolase-like superfamily. FabH family. As to quaternary structure, homodimer.

The protein localises to the cytoplasm. The catalysed reaction is malonyl-[ACP] + acetyl-CoA + H(+) = 3-oxobutanoyl-[ACP] + CO2 + CoA. Its pathway is lipid metabolism; fatty acid biosynthesis. In terms of biological role, catalyzes the condensation reaction of fatty acid synthesis by the addition to an acyl acceptor of two carbons from malonyl-ACP. Catalyzes the first condensation reaction which initiates fatty acid synthesis and may therefore play a role in governing the total rate of fatty acid production. Possesses both acetoacetyl-ACP synthase and acetyl transacylase activities. Its substrate specificity determines the biosynthesis of branched-chain and/or straight-chain of fatty acids. The sequence is that of Beta-ketoacyl-[acyl-carrier-protein] synthase III from Streptococcus equi subsp. equi (strain 4047).